The sequence spans 291 residues: 33 kDa chaperonin (291 aa).

2 disulfide bridges follow: C235-C237 and C268-C271.

Belongs to the HSP33 family. Post-translationally, under oxidizing conditions two disulfide bonds are formed involving the reactive cysteines. Under reducing conditions zinc is bound to the reactive cysteines and the protein is inactive.

Its subcellular location is the cytoplasm. Functionally, redox regulated molecular chaperone. Protects both thermally unfolding and oxidatively damaged proteins from irreversible aggregation. Plays an important role in the bacterial defense system toward oxidative stress. The chain is 33 kDa chaperonin from Bacillus velezensis (strain DSM 23117 / BGSC 10A6 / LMG 26770 / FZB42) (Bacillus amyloliquefaciens subsp. plantarum).